Reading from the N-terminus, the 235-residue chain is Large ribosomal subunit protein bL25 (235 aa).

The disordered stretch occupies residues 201–235 (PVAEAKGKGKAAKPAATAKPAAAAAKPAAKPKAKK). Low complexity predominate over residues 212–228 (AKPAATAKPAAAAAKPA).

This sequence belongs to the bacterial ribosomal protein bL25 family. CTC subfamily. Part of the 50S ribosomal subunit; part of the 5S rRNA/L5/L18/L25 subcomplex. Contacts the 5S rRNA. Binds to the 5S rRNA independently of L5 and L18.

In terms of biological role, this is one of the proteins that binds to the 5S RNA in the ribosome where it forms part of the central protuberance. In Verminephrobacter eiseniae (strain EF01-2), this protein is Large ribosomal subunit protein bL25.